The primary structure comprises 520 residues: MLARGLPLRSALVKACPPILSTVGEGWGHHRVGTGEGAGISTKTPRPYSEIPSPGDNGWLNLYHFWREKGSQRIHFRHIENFQKYGPIYREKLGNLESVYIIHPEDVAHLFKFEGSYPERYDIPPWLAYHRYYQKPIGVLFKKSGTWKKDRVVLNTEVMAPEAIKNFIPLLNPVSQDFVSLLHKRIKQQGSGKFVGDIKEDLFHFAFESITNVMFGERLGMLEETVNPEAQKFIDAVYKMFHTSVPLLNVPPELYRLFRTKTWRDHVAAWDTIFNKAEKYTEIFYQDLRRKTEFRNYPGILYCLLKSEKMLLEDVKANITEMLAGGVNTTSMTLQWHLYEMARSLNVQEMLREEVLNARRQAEGDISKMLQMVPLLKASIKETLRLHPISVTLQRYPESDLVLQDYLIPAKTLVQVAIYAMGRDPAFFSSPDKFDPTRWLSKDKDLIHFRNLGFGWGVRQCVGRRIAELEMTLFLIHILENFKVEMQHIGDVDTIFNLILTPDKPIFLVFRPFNQDPPQA.

The N-terminal 39 residues, 1-39, are a transit peptide targeting the mitochondrion; that stretch reads MLARGLPLRSALVKACPPILSTVGEGWGHHRVGTGEGAG. Position 461 (cysteine 461) interacts with heme.

This sequence belongs to the cytochrome P450 family. As to quaternary structure, interacts with FDX1/adrenodoxin. Heme serves as cofactor. Detected in adrenal cortex and corpus luteum (at protein level).

Its subcellular location is the mitochondrion inner membrane. It catalyses the reaction 6 reduced [adrenodoxin] + cholesterol + 3 O2 + 6 H(+) = 4-methylpentanal + pregnenolone + 6 oxidized [adrenodoxin] + 4 H2O. The catalysed reaction is 2 reduced [adrenodoxin] + cholesterol + O2 + 2 H(+) = (22R)-hydroxycholesterol + 2 oxidized [adrenodoxin] + H2O. The enzyme catalyses (22R)-hydroxycholesterol + 2 reduced [adrenodoxin] + O2 + 2 H(+) = (20R,22R)-20,22-dihydroxycholesterol + 2 oxidized [adrenodoxin] + H2O. It carries out the reaction (20R,22R)-20,22-dihydroxycholesterol + 2 reduced [adrenodoxin] + O2 + 2 H(+) = 4-methylpentanal + pregnenolone + 2 oxidized [adrenodoxin] + 2 H2O. The protein operates within lipid metabolism; C21-steroid hormone metabolism. Its pathway is steroid metabolism; cholesterol metabolism. Functionally, a cytochrome P450 monooxygenase that catalyzes the side-chain hydroxylation and cleavage of cholesterol to pregnenolone, the precursor of most steroid hormones. Catalyzes three sequential oxidation reactions of cholesterol, namely the hydroxylation at C22 followed with the hydroxylation at C20 to yield 20R,22R-hydroxycholesterol that is further cleaved between C20 and C22 to yield the C21-steroid pregnenolone and 4-methylpentanal. Mechanistically, uses molecular oxygen inserting one oxygen atom into a substrate and reducing the second into a water molecule. Two electrons are provided by NADPH via a two-protein mitochondrial transfer system comprising flavoprotein FDXR (adrenodoxin/ferredoxin reductase) and nonheme iron-sulfur protein FDX1 or FDX2 (adrenodoxin/ferredoxin). This Bos taurus (Bovine) protein is Cholesterol side-chain cleavage enzyme, mitochondrial (CYP11A1).